A 465-amino-acid chain; its full sequence is MTSEKVETVVAGNYLEMEREEEGSKSTTGKLSKFFWHGGSVYDAWFSCASNQVAQVLLTLPYSFSQLGMLSGILFQIFYGLMGSWTAYIISVLYVEYRTRKEREKVDFRNHVIQWFEVLDGLLGKHWRNLGLFFNCTFLLFGSVIQLIACASNIYYINDHLDKRTWTYIFGACCATTVFIPSFHNYRIWSFLGLVMTTYTAWYMTIASILHGQAEDVKHSGPTKLVLYFTGATNILYTFGGHAVTVEIMHAMWKPQKFKMIYLIATLYVMTLTLPSAAAVYWAFGDNLLTHSNALSLLPRTGFRDTAVILMLIHQFITFGFACTPLYFVWEKFLGVHETKSLLKRALVRLPVVIPIWFLAIIFPFFGPINSTVGSLLVSFTVYIIPALAHMVTFASAPARENAVERPPSFLGGWVGLYSVNVFVAVWVLVVGFGLGGWASMLNFVHQIKTFGLFAKCFQCPPHKA.

Topologically, residues 1 to 52 (MTSEKVETVVAGNYLEMEREEEGSKSTTGKLSKFFWHGGSVYDAWFSCASNQ) are cytoplasmic. The helical transmembrane segment at 53–70 (VAQVLLTLPYSFSQLGML) threads the bilayer. The Extracellular segment spans residues 71–72 (SG). The chain crosses the membrane as a helical span at residues 73 to 93 (ILFQIFYGLMGSWTAYIISVL). Residues 94–129 (YVEYRTRKEREKVDFRNHVIQWFEVLDGLLGKHWRN) are Cytoplasmic-facing. The chain crosses the membrane as a helical span at residues 130–150 (LGLFFNCTFLLFGSVIQLIAC). Residues 151 to 165 (ASNIYYINDHLDKRT) lie on the Extracellular side of the membrane. The chain crosses the membrane as a helical span at residues 166–186 (WTYIFGACCATTVFIPSFHNY). At 187–189 (RIW) the chain is on the cytoplasmic side. A helical transmembrane segment spans residues 190–210 (SFLGLVMTTYTAWYMTIASIL). The Extracellular segment spans residues 211–225 (HGQAEDVKHSGPTKL). Residues 226-246 (VLYFTGATNILYTFGGHAVTV) traverse the membrane as a helical segment. The Cytoplasmic portion of the chain corresponds to 247-259 (EIMHAMWKPQKFK). A helical transmembrane segment spans residues 260–280 (MIYLIATLYVMTLTLPSAAAV). Over 281-307 (YWAFGDNLLTHSNALSLLPRTGFRDTA) the chain is Extracellular. A helical transmembrane segment spans residues 308 to 328 (VILMLIHQFITFGFACTPLYF). Residues 329 to 349 (VWEKFLGVHETKSLLKRALVR) lie on the Cytoplasmic side of the membrane. A helical membrane pass occupies residues 350–370 (LPVVIPIWFLAIIFPFFGPIN). The Extracellular segment spans residues 371–374 (STVG). Residues 375 to 395 (SLLVSFTVYIIPALAHMVTFA) traverse the membrane as a helical segment. The Cytoplasmic portion of the chain corresponds to 396–421 (SAPARENAVERPPSFLGGWVGLYSVN). The chain crosses the membrane as a helical span at residues 422–442 (VFVAVWVLVVGFGLGGWASML). The Extracellular segment spans residues 443–465 (NFVHQIKTFGLFAKCFQCPPHKA).

This sequence belongs to the amino acid/polyamine transporter 2 family. Amino acid/auxin permease (AAAP) (TC 2.A.18.1) subfamily. In terms of tissue distribution, shoots and roots of nodulating plants. Low levels in roots, nodules, stems, petioles, leaves, shoot apices and flowers.

It is found in the cell membrane. In terms of biological role, carrier protein involved in proton-driven auxin influx. Mediates the formation of auxin gradient from developing leaves (site of auxin biosynthesis) to tips by contributing to the loading of auxin in vascular tissues and facilitating acropetal (base to tip) auxin transport within inner tissues of the root apex, and basipetal (tip to base) auxin transport within outer tissues of the root apex. May be involved in lateral roots and nodules formation. The polypeptide is Auxin transporter-like protein 3 (LAX3) (Medicago truncatula (Barrel medic)).